Here is a 486-residue protein sequence, read N- to C-terminus: Mogroside I-E synthase (486 aa).

The UDP-alpha-D-glucose site is built by S302, C360, Q362, W380, N381, S382, E385, D401, and Q402.

It belongs to the UDP-glycosyltransferase family. In terms of tissue distribution, highly expressed in young fruits 15 days after anthesis (15-DAA).

The catalysed reaction is mogrol + UDP-alpha-D-glucose = mogroside IE + UDP + H(+). The enzyme catalyses mogroside I-A1 + UDP-alpha-D-glucose = mogroside IIE + UDP + H(+). It catalyses the reaction mogroside II-A1 + UDP-alpha-D-glucose = mogroside IIIX + UDP + H(+). It carries out the reaction mogroside II-A + UDP-alpha-D-glucose = mogroside III + UDP + H(+). It functions in the pathway secondary metabolite biosynthesis; terpenoid biosynthesis. Functionally, UDP-glycosyltransferase involved in the biosynthesis of cucurbitacin and mogroside tetracyclic triterpene natural products (e.g. siamenoside I and mogrosides IV, V and VI). Cucurbitacins have cytotoxic properties and exhibit deterrent taste as a defense barrier against herbivores. Mogrosides are nonsugar highly oxygenated compounds used as high-intensity zero-calorie sweeteners; they also possess pharmacological properties such as regulating immunity, lowering blood sugar and lipid levels, protecting the liver, and acting as antioxidants and antitumor agents. Catalyzes the C3 primary glucosylation of mogrol, mogroside I-A1, mogroside II-A1 and mogroside II-A. In Siraitia grosvenorii (Monk's fruit), this protein is Mogroside I-E synthase.